Here is a 188-residue protein sequence, read N- to C-terminus: Diphosphoinositol polyphosphate phosphohydrolase DDP1 (188 aa).

Over residues 1-21 (MGKTADNHGPVRSETAREGRE) the composition is skewed to basic and acidic residues. The segment at 1–23 (MGKTADNHGPVRSETAREGRENQ) is disordered. One can recognise a Nudix hydrolase domain in the interval 30-179 (GARLVAGCIC…KRPELLEALN (150 aa)). 1D-myo-inositol hexakisphosphate is bound by residues Arg-32, Ser-52, Ser-53, and Lys-63. 5-diphospho-1D-myo-inositol 1,2,3,4,6-pentakisphosphate contacts are provided by Arg-32, Ser-52, Ser-53, and Lys-63. Positions 32, 52, 53, and 63 each coordinate P(1),P(5)-bis(5'-adenosyl) pentaphosphate. Residues Lys-63, Glu-80, and Glu-84 each coordinate Mg(2+). The Nudix box motif lies at 65-86 (GVEKDEPNYETTAQRETWEEAG). Asp-100 lines the P(1),P(5)-bis(5'-adenosyl) pentaphosphate pocket. 1D-myo-inositol hexakisphosphate-binding residues include Arg-102, Arg-129, Arg-152, and Arg-171. Arg-102 provides a ligand contact to 5-diphospho-1D-myo-inositol 1,2,3,4,6-pentakisphosphate. 5-diphospho-1D-myo-inositol 1,2,3,4,6-pentakisphosphate is bound by residues Arg-152 and Arg-171. P(1),P(5)-bis(5'-adenosyl) pentaphosphate-binding residues include Arg-152, Arg-171, and Glu-173.

Belongs to the Nudix hydrolase family. DIPP subfamily. Mg(2+) is required as a cofactor. It depends on Mn(2+) as a cofactor. Requires Zn(2+) as cofactor.

It localises to the cytoplasm. The protein localises to the nucleus. The enzyme catalyses diphospho-myo-inositol polyphosphate + H2O = myo-inositol polyphosphate + phosphate.. The catalysed reaction is P(1),P(6)-bis(5'-adenosyl) hexaphosphate + H2O = adenosine 5'-pentaphosphate + AMP + 2 H(+). It carries out the reaction P(1),P(5)-bis(5'-adenosyl) pentaphosphate + H2O = adenosine 5'-tetraphosphate + AMP + 2 H(+). It catalyses the reaction [phosphate](n+1) + n H2O = (n+1) phosphate + n H(+). In terms of biological role, may eliminate potentially toxic dinucleoside polyphosphates during sporulation. Most active against diadenosine 5',5'''-P1,P6-hexaphosphate (Ap6A). Can also hydrolyze diadenosine 5',5'''-P1,P5-pentaphosphate (Ap5A), adenosine 5'-pentaphosphate (p5A), and adenosine 5'-tetraphosphate (p4A) are also substrates, but not diadenosine 5',5'''-P1,P4-tetraphosphate (Ap4A) or other dinucleotides, mononucleotides, nucleotide sugars, or nucleotide alcohols. Also cleaves a beta-phosphate from the diphosphate groups in PP-InsP5 (diphosphoinositol pentakisphosphate) and [PP]2-InsP4 (bisdiphosphoinositol tetrakisphosphate). Also has endopolyphosphatase activity. The polypeptide is Diphosphoinositol polyphosphate phosphohydrolase DDP1 (DDP1) (Saccharomyces cerevisiae (strain ATCC 204508 / S288c) (Baker's yeast)).